Here is a 142-residue protein sequence, read N- to C-terminus: Large ribosomal subunit protein uL13 (142 aa).

It belongs to the universal ribosomal protein uL13 family. As to quaternary structure, part of the 50S ribosomal subunit.

Functionally, this protein is one of the early assembly proteins of the 50S ribosomal subunit, although it is not seen to bind rRNA by itself. It is important during the early stages of 50S assembly. This Tolumonas auensis (strain DSM 9187 / NBRC 110442 / TA 4) protein is Large ribosomal subunit protein uL13.